A 359-amino-acid polypeptide reads, in one-letter code: Olfactory receptor 5T2 (359 aa).

At 1–64 (MSYSIYKSTV…GFTDNLELQT (64 aa)) the chain is on the extracellular side. Asn-44 is a glycosylation site (N-linked (GlcNAc...) asparagine). Residues 65-85 (IFFFLFLAIYLFTLMGNLGLI) form a helical membrane-spanning segment. Residues 86–93 (LVVIRDSQ) are Cytoplasmic-facing. A helical transmembrane segment spans residues 94 to 114 (LHKPMYYFLSMLSSVDACYSS). At 115 to 138 (VITPNMLVDFTTKNKVISFLGCVA) the chain is on the extracellular side. The chain crosses the membrane as a helical span at residues 139–159 (QVFLACSFGTTECFLLAAMAY). At 160–178 (DRYVAIYNPLLYSVSMSPR) the chain is on the cytoplasmic side. The chain crosses the membrane as a helical span at residues 179 to 199 (VYMPLINASYVAGILHATIHT). Over 200-235 (VATFSLSFCGANEIRRVFCDIPPLLAISYSDTHTNQ) the chain is Extracellular. A helical membrane pass occupies residues 236 to 256 (LLLFYFVGSIELVTILIVLIS). Over 257–276 (YGLILLAILKMYSAEGRRKV) the chain is Cytoplasmic. The chain crosses the membrane as a helical span at residues 277 to 297 (FSTCGAHLTGVSIYYGTILFM). The Extracellular segment spans residues 298-310 (YVRPSSSYASDHD). The chain crosses the membrane as a helical span at residues 311 to 331 (MIVSIFYTIVIPLLNPVIYSL). Residues 332-359 (RNKDVKDSMKKMFGKNQVINKVYFHTKK) are Cytoplasmic-facing.

The protein belongs to the G-protein coupled receptor 1 family.

It localises to the cell membrane. Functionally, odorant receptor. The protein is Olfactory receptor 5T2 (OR5T2) of Homo sapiens (Human).